The sequence spans 430 residues: Glutamate-1-semialdehyde 2,1-aminomutase (430 aa).

The residue at position 270 (Lys-270) is an N6-(pyridoxal phosphate)lysine.

It belongs to the class-III pyridoxal-phosphate-dependent aminotransferase family. HemL subfamily. Homodimer. The cofactor is pyridoxal 5'-phosphate.

The protein localises to the cytoplasm. It carries out the reaction (S)-4-amino-5-oxopentanoate = 5-aminolevulinate. The protein operates within porphyrin-containing compound metabolism; protoporphyrin-IX biosynthesis; 5-aminolevulinate from L-glutamyl-tRNA(Glu): step 2/2. This is Glutamate-1-semialdehyde 2,1-aminomutase from Cupriavidus necator (strain ATCC 17699 / DSM 428 / KCTC 22496 / NCIMB 10442 / H16 / Stanier 337) (Ralstonia eutropha).